A 304-amino-acid polypeptide reads, in one-letter code: MATH domain and coiled-coil domain-containing protein At2g42470 (304 aa).

The region spanning 6–123 (QTSFTFEIDN…NNKLIIEVQV (118 aa)) is the MATH domain. Residues 219–292 (FKVDWLKKKL…LKIELDRTRR (74 aa)) are a coiled coil.

The sequence is that of MATH domain and coiled-coil domain-containing protein At2g42470 from Arabidopsis thaliana (Mouse-ear cress).